The primary structure comprises 280 residues: Protease HtpX (280 aa).

Transmembrane regions (helical) follow at residues 7–26 and 30–49; these read TFILLASLTALLVVIGGLLG and GMLVALLFAGIMNFSAYWYS. Residue His129 participates in Zn(2+) binding. The active site involves Glu130. His133 contacts Zn(2+). Transmembrane regions (helical) follow at residues 146–166 and 178–198; these read ATIAGAISGIANMFMWLSMFG and VVGMIMMIVAPLAAGLIQMAI. Glu203 is a Zn(2+) binding site.

The protein belongs to the peptidase M48B family. It depends on Zn(2+) as a cofactor.

It is found in the cell inner membrane. The sequence is that of Protease HtpX from Legionella pneumophila (strain Corby).